The following is a 210-amino-acid chain: Putative 3-methyladenine DNA glycosylase (210 aa).

It belongs to the DNA glycosylase MPG family.

The sequence is that of Putative 3-methyladenine DNA glycosylase from Lactobacillus acidophilus (strain ATCC 700396 / NCK56 / N2 / NCFM).